Consider the following 461-residue polypeptide: Nuclear distribution protein PAC1 (461 aa).

Positions 64–93 (NSIIRLHRKILDLEQKCQQLTEELEAVPTE) form a coiled coil. 7 WD repeats span residues 118 to 157 (DVGA…MPLH), 161 to 203 (AHMK…AFQL), 209 to 252 (SHEH…KSFQ), 254 to 292 (HNQW…SMAV), 318 to 362 (DDQV…FIPH), 382 to 421 (GHTS…KVWP), and 423 to 461 (ASHG…VFMR).

The protein belongs to the WD repeat LIS1/nudF family. Self-associates. Interacts with NDL1 and dynein.

Its subcellular location is the cytoplasm. It localises to the cytoskeleton. The protein resides in the spindle pole. Functionally, positively regulates the activity of the minus-end directed microtubule motor protein dynein. Plays a central role in positioning the mitotic spindle at the bud neck during cell division. Targets cytoplasmic dynein to microtubule plus ends, thereby promoting dynein-mediated microtubule sliding along the bud cortex and consequently the movement of the mitotic spindle to the bud neck. The polypeptide is Nuclear distribution protein PAC1 (Eremothecium gossypii (strain ATCC 10895 / CBS 109.51 / FGSC 9923 / NRRL Y-1056) (Yeast)).